Reading from the N-terminus, the 245-residue chain is 1-(5-phosphoribosyl)-5-[(5-phosphoribosylamino)methylideneamino] imidazole-4-carboxamide isomerase (245 aa).

The active-site Proton acceptor is the D7. D129 acts as the Proton donor in catalysis.

Belongs to the HisA/HisF family.

It is found in the cytoplasm. The enzyme catalyses 1-(5-phospho-beta-D-ribosyl)-5-[(5-phospho-beta-D-ribosylamino)methylideneamino]imidazole-4-carboxamide = 5-[(5-phospho-1-deoxy-D-ribulos-1-ylimino)methylamino]-1-(5-phospho-beta-D-ribosyl)imidazole-4-carboxamide. It functions in the pathway amino-acid biosynthesis; L-histidine biosynthesis; L-histidine from 5-phospho-alpha-D-ribose 1-diphosphate: step 4/9. The chain is 1-(5-phosphoribosyl)-5-[(5-phosphoribosylamino)methylideneamino] imidazole-4-carboxamide isomerase from Alteromonas mediterranea (strain DSM 17117 / CIP 110805 / LMG 28347 / Deep ecotype).